Here is a 343-residue protein sequence, read N- to C-terminus: uncharacterized protein (343 aa).

Transmembrane regions (helical) follow at residues 13–33 (VILY…SMCG), 44–64 (LWGY…ATLD), 71–91 (MHPV…LFFI), 121–141 (ILLL…LTGL), 148–168 (NASL…YLIF), 177–197 (FLGI…GDFS), 203–223 (VAVT…LDTV), 244–264 (VGGF…ELPL), 269–289 (YALG…YIAI), 296–316 (MVGA…FIIL), and 320–340 (FSIM…ILYW). 2 consecutive EamA domains span residues 55–192 (IFFG…YLLT) and 216–340 (FFWS…ILYW).

The protein belongs to the EamA transporter family.

It localises to the cell membrane. This is an uncharacterized protein from Methanothermobacter thermautotrophicus (strain ATCC 29096 / DSM 1053 / JCM 10044 / NBRC 100330 / Delta H) (Methanobacterium thermoautotrophicum).